The chain runs to 104 residues: MLRKAFVMSVFPDCHDDYQRRHNPIWPELAEVLKNHGAHHYSIFLDKQRNLLFGYVEVESEARWEAIAQTEVCQRWWKYMSDVMPSNPDNSPVSEALEPVFYLD.

A substrate-binding site is contributed by Y18. H22 acts as the Proton donor in catalysis. Residues Y41 and 76 to 77 (WW) contribute to the substrate site.

The protein belongs to the rhamnose mutarotase family. As to quaternary structure, homodimer.

It is found in the cytoplasm. It catalyses the reaction alpha-L-rhamnose = beta-L-rhamnose. It participates in carbohydrate metabolism; L-rhamnose metabolism. Functionally, involved in the anomeric conversion of L-rhamnose. In Pectobacterium carotovorum subsp. carotovorum (strain PC1), this protein is L-rhamnose mutarotase.